Reading from the N-terminus, the 273-residue chain is Formamidopyrimidine-DNA glycosylase (273 aa).

The Schiff-base intermediate with DNA role is filled by Pro-2. Glu-3 (proton donor) is an active-site residue. Lys-59 functions as the Proton donor; for beta-elimination activity in the catalytic mechanism. His-92 and Arg-111 together coordinate DNA. Residues 239–273 form an FPG-type zinc finger; the sequence is KVYGKTDEPCVVCGTPIEKIKLNGRGTHFCPNCQK. Arg-263 (proton donor; for delta-elimination activity) is an active-site residue.

This sequence belongs to the FPG family. As to quaternary structure, monomer. The cofactor is Zn(2+).

It catalyses the reaction Hydrolysis of DNA containing ring-opened 7-methylguanine residues, releasing 2,6-diamino-4-hydroxy-5-(N-methyl)formamidopyrimidine.. The catalysed reaction is 2'-deoxyribonucleotide-(2'-deoxyribose 5'-phosphate)-2'-deoxyribonucleotide-DNA = a 3'-end 2'-deoxyribonucleotide-(2,3-dehydro-2,3-deoxyribose 5'-phosphate)-DNA + a 5'-end 5'-phospho-2'-deoxyribonucleoside-DNA + H(+). Involved in base excision repair of DNA damaged by oxidation or by mutagenic agents. Acts as a DNA glycosylase that recognizes and removes damaged bases. Has a preference for oxidized purines, such as 7,8-dihydro-8-oxoguanine (8-oxoG). Has AP (apurinic/apyrimidinic) lyase activity and introduces nicks in the DNA strand. Cleaves the DNA backbone by beta-delta elimination to generate a single-strand break at the site of the removed base with both 3'- and 5'-phosphates. The chain is Formamidopyrimidine-DNA glycosylase from Listeria monocytogenes serovar 1/2a (strain ATCC BAA-679 / EGD-e).